A 460-amino-acid polypeptide reads, in one-letter code: 3-isopropylmalate dehydratase large subunit (460 aa).

The [4Fe-4S] cluster site is built by Cys-341, Cys-401, and Cys-404.

Belongs to the aconitase/IPM isomerase family. LeuC type 1 subfamily. As to quaternary structure, heterodimer of LeuC and LeuD. It depends on [4Fe-4S] cluster as a cofactor.

It catalyses the reaction (2R,3S)-3-isopropylmalate = (2S)-2-isopropylmalate. It functions in the pathway amino-acid biosynthesis; L-leucine biosynthesis; L-leucine from 3-methyl-2-oxobutanoate: step 2/4. In terms of biological role, catalyzes the isomerization between 2-isopropylmalate and 3-isopropylmalate, via the formation of 2-isopropylmaleate. The sequence is that of 3-isopropylmalate dehydratase large subunit from Phocaeicola vulgatus (strain ATCC 8482 / DSM 1447 / JCM 5826 / CCUG 4940 / NBRC 14291 / NCTC 11154) (Bacteroides vulgatus).